We begin with the raw amino-acid sequence, 225 residues long: Chromosome partition protein MukE (225 aa).

Positions 197-225 are disordered; the sequence is RDGEAMPIENHLQLNDETEESQPDSGEEE. Positions 212-225 are enriched in acidic residues; it reads DETEESQPDSGEEE.

The protein belongs to the MukE family. Interacts, and probably forms a ternary complex, with MukF and MukB. The complex formation is stimulated by calcium or magnesium.

The protein resides in the cytoplasm. It is found in the nucleoid. Functionally, involved in chromosome condensation, segregation and cell cycle progression. May participate in facilitating chromosome segregation by condensation DNA from both sides of a centrally located replisome during cell division. Probably acts via its interaction with MukB and MukF. The chain is Chromosome partition protein MukE from Salmonella typhi.